The sequence spans 85 residues: Large ribosomal subunit protein bL31B (85 aa).

Belongs to the bacterial ribosomal protein bL31 family. Type B subfamily. As to quaternary structure, part of the 50S ribosomal subunit.

The sequence is that of Large ribosomal subunit protein bL31B from Macrococcus caseolyticus (strain JCSC5402) (Macrococcoides caseolyticum).